We begin with the raw amino-acid sequence, 205 residues long: Methylthioribulose-1-phosphate dehydratase (205 aa).

Residues histidine 96 and histidine 98 each contribute to the Zn(2+) site.

The protein belongs to the aldolase class II family. MtnB subfamily. It depends on Zn(2+) as a cofactor.

The catalysed reaction is 5-(methylsulfanyl)-D-ribulose 1-phosphate = 5-methylsulfanyl-2,3-dioxopentyl phosphate + H2O. It participates in amino-acid biosynthesis; L-methionine biosynthesis via salvage pathway; L-methionine from S-methyl-5-thio-alpha-D-ribose 1-phosphate: step 2/6. In terms of biological role, catalyzes the dehydration of methylthioribulose-1-phosphate (MTRu-1-P) into 2,3-diketo-5-methylthiopentyl-1-phosphate (DK-MTP-1-P). In Exiguobacterium sp. (strain ATCC BAA-1283 / AT1b), this protein is Methylthioribulose-1-phosphate dehydratase.